The following is a 944-amino-acid chain: Protein unc-45 homolog A (944 aa).

The interval 1–25 is disordered; sequence MTVSGPGTPEPRPSDPGASSAEELR. 3 TPR repeats span residues 21 to 54, 58 to 91, and 92 to 125; these read AEEL…GATP, AILH…DGGD, and VKAL…EPKN. Lys70 carries the post-translational modification N6-acetyllysine. Lys483 is subject to N6-acetyllysine.

As to quaternary structure, interacts with PGR isoforms A and B as well as with NR3C1 in the absence of ligand, and with HSP90AB1. Binding to HSP90AB1 involves 2 UNC45A monomers per HSP90AB1 dimer.

It is found in the cytoplasm. Its subcellular location is the perinuclear region. It localises to the nucleus. Its function is as follows. May act as co-chaperone for HSP90 (Potential). Prevents the stimulation of HSP90AB1 ATPase activity by AHSA1. Positive factor in promoting PGR function in the cell. May be necessary for proper folding of myosin (Potential). Necessary for normal cell proliferation. Necessary for normal myotube formation and myosin accumulation during muscle cell development. May play a role in erythropoiesis in stroma cells in the spleen. This chain is Protein unc-45 homolog A (Unc45a), found in Rattus norvegicus (Rat).